Here is a 301-residue protein sequence, read N- to C-terminus: Amylovoran biosynthesis glycosyltransferase AmsB (301 aa).

It belongs to the glycosyltransferase 2 family.

Its pathway is glycan metabolism; exopolysaccharide biosynthesis. Functionally, involved in the biosynthesis of amylovoran, which functions as a virulence factor. May function as a glycosyl transferase which transfers galactose from UDP-galactose to a lipid-linked amylovoran-subunit precursor. The polypeptide is Amylovoran biosynthesis glycosyltransferase AmsB (amsB) (Erwinia amylovora (Fire blight bacteria)).